A 511-amino-acid polypeptide reads, in one-letter code: Probable mannosyl-oligosaccharide alpha-1,2-mannosidase 1B (511 aa).

The signal sequence occupies residues 1–18 (MHLPSLSLAWALAGSSLA). N-linked (GlcNAc...) asparagine glycosylation is found at asparagine 90 and asparagine 177. The cysteines at positions 327 and 356 are disulfide-linked. Glutamate 370 (proton donor) is an active-site residue. Asparagine 433 carries N-linked (GlcNAc...) asparagine glycosylation. A Ca(2+)-binding site is contributed by threonine 501.

It belongs to the glycosyl hydrolase 47 family. In terms of assembly, monomer. It depends on Ca(2+) as a cofactor. Requires Mg(2+) as cofactor.

Its subcellular location is the cytoplasmic vesicle lumen. It catalyses the reaction N(4)-(alpha-D-Man-(1-&gt;2)-alpha-D-Man-(1-&gt;2)-alpha-D-Man-(1-&gt;3)-[alpha-D-Man-(1-&gt;2)-alpha-D-Man-(1-&gt;3)-[alpha-D-Man-(1-&gt;2)-alpha-D-Man-(1-&gt;6)]-alpha-D-Man-(1-&gt;6)]-beta-D-Man-(1-&gt;4)-beta-D-GlcNAc-(1-&gt;4)-beta-D-GlcNAc)-L-asparaginyl-[protein] (N-glucan mannose isomer 9A1,2,3B1,2,3) + 4 H2O = N(4)-(alpha-D-Man-(1-&gt;3)-[alpha-D-Man-(1-&gt;3)-[alpha-D-Man-(1-&gt;6)]-alpha-D-Man-(1-&gt;6)]-beta-D-Man-(1-&gt;4)-beta-D-GlcNAc-(1-&gt;4)-beta-D-GlcNAc)-L-asparaginyl-[protein] (N-glucan mannose isomer 5A1,2) + 4 beta-D-mannose. The enzyme catalyses N(4)-(alpha-D-Man-(1-&gt;2)-alpha-D-Man-(1-&gt;2)-alpha-D-Man-(1-&gt;3)-[alpha-D-Man-(1-&gt;3)-[alpha-D-Man-(1-&gt;2)-alpha-D-Man-(1-&gt;6)]-alpha-D-Man-(1-&gt;6)]-beta-D-Man-(1-&gt;4)-beta-D-GlcNAc-(1-&gt;4)-beta-D-GlcNAc)-L-asparaginyl-[protein] (N-glucan mannose isomer 8A1,2,3B1,3) + 3 H2O = N(4)-(alpha-D-Man-(1-&gt;3)-[alpha-D-Man-(1-&gt;3)-[alpha-D-Man-(1-&gt;6)]-alpha-D-Man-(1-&gt;6)]-beta-D-Man-(1-&gt;4)-beta-D-GlcNAc-(1-&gt;4)-beta-D-GlcNAc)-L-asparaginyl-[protein] (N-glucan mannose isomer 5A1,2) + 3 beta-D-mannose. It functions in the pathway protein modification; protein glycosylation. Involved in the maturation of Asn-linked oligosaccharides. Progressively trims alpha-1,2-linked mannose residues from Man(9)GlcNAc(2) to produce Man(5)GlcNAc(2). The polypeptide is Probable mannosyl-oligosaccharide alpha-1,2-mannosidase 1B (mns1B) (Aspergillus clavatus (strain ATCC 1007 / CBS 513.65 / DSM 816 / NCTC 3887 / NRRL 1 / QM 1276 / 107)).